The sequence spans 538 residues: Nucleobase-ascorbate transporter 7 (538 aa).

Residues 1 to 11 show a composition bias toward gly residues; that stretch reads MAGGGGGGGGV. The tract at residues 1–20 is disordered; that stretch reads MAGGGGGGGGVAPPLKHDGL. The next 12 helical transmembrane spans lie at 45-65, 81-101, 103-123, 143-163, 166-186, 191-211, 229-249, 295-315, 372-394, 398-420, 432-452, and 471-491; these read AILLGFQHYLVMLGTTVLIPT, MVQTLLFVSGLNTLLQSFFGT, LPAVIGGSYTYVPTTLSIILA, IQGALIVASILQIVVGFSGLW, VVRLLSPLSAVPLVALAGFGL, FPLLAKCIEIGLPEIILLLLF, FAVIFSVVIVWIYAHLLTVGG, FAMMAVSFVSLIESTGTYIVV, VVQISAGFMIFFSILGKFGAIFA, APVVAALHCLFFAYVGAGGLSLL, FILGFSVFMGLSIPQYFNQYT, and INVPFSSKAFVAGILAFFLDV.

The protein belongs to the nucleobase:cation symporter-2 (NCS2) (TC 2.A.40) family. Expressed exclusively in ovules.

The protein localises to the cell membrane. The polypeptide is Nucleobase-ascorbate transporter 7 (NAT7) (Arabidopsis thaliana (Mouse-ear cress)).